The sequence spans 383 residues: N-acetyldiaminopimelate deacetylase (383 aa).

Asp72 is a catalytic residue. Catalysis depends on Glu131, which acts as the Proton acceptor.

The protein belongs to the peptidase M20A family. N-acetyldiaminopimelate deacetylase subfamily.

The catalysed reaction is N-acetyl-(2S,6S)-2,6-diaminopimelate + H2O = (2S,6S)-2,6-diaminopimelate + acetate. The protein operates within amino-acid biosynthesis; L-lysine biosynthesis via DAP pathway; LL-2,6-diaminopimelate from (S)-tetrahydrodipicolinate (acetylase route): step 3/3. Its function is as follows. Catalyzes the conversion of N-acetyl-diaminopimelate to diaminopimelate and acetate. In Lacticaseibacillus paracasei (strain ATCC 334 / BCRC 17002 / CCUG 31169 / CIP 107868 / KCTC 3260 / NRRL B-441) (Lactobacillus paracasei), this protein is N-acetyldiaminopimelate deacetylase.